The chain runs to 659 residues: Interferon-induced GTP-binding protein Mx2 (659 aa).

The Dynamin-type G domain maps to 65-338 (DLALPAIAVI…LISHICKSLP (274 aa)). A G1 motif region spans residues 75–82 (GDQSSGKS). 75-82 (GDQSSGKS) contributes to the GTP binding site. Residues 100 to 102 (VTR) are G2 motif. The segment at 176 to 179 (DLPG) is G3 motif. GTP contacts are provided by residues 176–180 (DLPGI) and 245–248 (TKPD). Residues 245–248 (TKPD) form a G4 motif region. The segment at 277–280 (KCRG) is G5 motif. A disordered region spans residues 547 to 567 (EAEEEERKHGKSRSSQSKNLQ). The GED domain occupies 571-659 (MDEIFQHLNA…AQRRLAKFPG (89 aa)).

Belongs to the TRAFAC class dynamin-like GTPase superfamily. Dynamin/Fzo/YdjA family.

It is found in the cytoplasm. Interferon-induced dynamin-like GTPase with antiviral activity against vesicular stomatitis virus (VSV). The sequence is that of Interferon-induced GTP-binding protein Mx2 (Mx2) from Rattus norvegicus (Rat).